The primary structure comprises 826 residues: U-box domain-containing protein 4 (826 aa).

Positions 172–204 (RSNQEILIEAVALERQKEMAEQSENNAEVEFLD) form a coiled coil. One can recognise a U-box domain in the interval 229–303 (AILADFFCPL…ANWCETNDVK (75 aa)). Residues 330–501 (GADVSARKVS…TRRDLSDFSP (172 aa)) are disordered. A compositionally biased stretch (polar residues) spans 347 to 360 (ASSSETGKPSFSSR). Residues 391–414 (DARRGSLNDFEDRSNDSRELRTDA) are compositionally biased toward basic and acidic residues. Ser396 bears the Phosphoserine mark. Residues 416-428 (GRSSVSSTTRGSV) show a composition bias toward low complexity. A compositionally biased stretch (basic and acidic residues) spans 492–501 (TRRDLSDFSP). 7 ARM repeats span residues 530 to 570 (NETR…LLAK), 573 to 612 (MDNR…NLSI), 614 to 653 (DNNK…SLSV), 655 to 694 (EENK…NLSI), 696 to 734 (QENK…NLAT), 736 to 775 (PEGR…QLST), and 778 to 817 (GRFC…YFRN).

It catalyses the reaction S-ubiquitinyl-[E2 ubiquitin-conjugating enzyme]-L-cysteine + [acceptor protein]-L-lysine = [E2 ubiquitin-conjugating enzyme]-L-cysteine + N(6)-ubiquitinyl-[acceptor protein]-L-lysine.. It functions in the pathway protein modification; protein ubiquitination. In terms of biological role, functions as an E3 ubiquitin ligase. The chain is U-box domain-containing protein 4 (PUB4) from Arabidopsis thaliana (Mouse-ear cress).